A 70-amino-acid chain; its full sequence is Large ribosomal subunit protein eL38 (70 aa).

It belongs to the eukaryotic ribosomal protein eL38 family.

The sequence is that of Large ribosomal subunit protein eL38 (RpL38) from Bombyx mori (Silk moth).